The chain runs to 531 residues: Probable bifunctional methylthioribulose-1-phosphate dehydratase/enolase-phosphatase E1 2 (531 aa).

A methylthioribulose-1-phosphate dehydratase region spans residues 1–248 (MGVPSEGAVG…AIKLHQLGLD (248 aa)). Cys120 is a substrate binding site. Residues His138 and His140 each contribute to the Zn(2+) site. Glu163 (proton donor/acceptor; for methylthioribulose-1-phosphate dehydratase activity) is an active-site residue. Residue His213 participates in Zn(2+) binding. The tract at residues 292 to 531 (ILLDIEGTTT…FRTIETFLEI (240 aa)) is enolase-phosphatase E1. Mg(2+) is bound by residues Asp295 and Glu297. Substrate contacts are provided by residues 430–431 (SS) and Lys464. Asp490 lines the Mg(2+) pocket.

The protein in the N-terminal section; belongs to the aldolase class II family. MtnB subfamily. It in the C-terminal section; belongs to the HAD-like hydrolase superfamily. MasA/MtnC family. Zn(2+) is required as a cofactor. Requires Mg(2+) as cofactor.

It catalyses the reaction 5-(methylsulfanyl)-D-ribulose 1-phosphate = 5-methylsulfanyl-2,3-dioxopentyl phosphate + H2O. The enzyme catalyses 5-methylsulfanyl-2,3-dioxopentyl phosphate + H2O = 1,2-dihydroxy-5-(methylsulfanyl)pent-1-en-3-one + phosphate. The protein operates within amino-acid biosynthesis; L-methionine biosynthesis via salvage pathway; L-methionine from S-methyl-5-thio-alpha-D-ribose 1-phosphate: step 2/6. It participates in amino-acid biosynthesis; L-methionine biosynthesis via salvage pathway; L-methionine from S-methyl-5-thio-alpha-D-ribose 1-phosphate: step 3/6. Its pathway is amino-acid biosynthesis; L-methionine biosynthesis via salvage pathway; L-methionine from S-methyl-5-thio-alpha-D-ribose 1-phosphate: step 4/6. This Vitis vinifera (Grape) protein is Probable bifunctional methylthioribulose-1-phosphate dehydratase/enolase-phosphatase E1 2.